Consider the following 506-residue polypeptide: Lysine--tRNA ligase (506 aa).

Glu-416 and Glu-423 together coordinate Mg(2+).

Belongs to the class-II aminoacyl-tRNA synthetase family. In terms of assembly, homodimer. It depends on Mg(2+) as a cofactor.

It localises to the cytoplasm. It carries out the reaction tRNA(Lys) + L-lysine + ATP = L-lysyl-tRNA(Lys) + AMP + diphosphate. The chain is Lysine--tRNA ligase from Xylella fastidiosa (strain M12).